The sequence spans 142 residues: Small ribosomal subunit protein uS12 (142 aa).

It belongs to the universal ribosomal protein uS12 family. In terms of assembly, part of the 30S ribosomal subunit.

In terms of biological role, with S4 and S5 plays an important role in translational accuracy. Located at the interface of the 30S and 50S subunits. In Methanocorpusculum labreanum (strain ATCC 43576 / DSM 4855 / Z), this protein is Small ribosomal subunit protein uS12.